The chain runs to 167 residues: CKLF-like MARVEL transmembrane domain-containing protein 7 (167 aa).

Residues 32–158 enclose the MARVEL domain; that stretch reads YPLTHGALFK…SLWLSYKITC (127 aa). Transmembrane regions (helical) follow at residues 35 to 55, 69 to 89, 102 to 122, and 132 to 152; these read THGALFKVAQMVTLLIAFICV, FEVVTMCDLIMILIFYLVHLF, LSELLHYLIGTLLLLIASIVI, and LVAGAIFGFLASFLCLASLWL.

The protein belongs to the chemokine-like factor family.

The protein resides in the membrane. The protein is CKLF-like MARVEL transmembrane domain-containing protein 7 (Cmtm7) of Mus musculus (Mouse).